The chain runs to 257 residues: Tryptophan synthase alpha chain (257 aa).

Residues glutamate 47 and aspartate 58 each act as proton acceptor in the active site.

This sequence belongs to the TrpA family. As to quaternary structure, tetramer of two alpha and two beta chains.

It carries out the reaction (1S,2R)-1-C-(indol-3-yl)glycerol 3-phosphate + L-serine = D-glyceraldehyde 3-phosphate + L-tryptophan + H2O. The protein operates within amino-acid biosynthesis; L-tryptophan biosynthesis; L-tryptophan from chorismate: step 5/5. In terms of biological role, the alpha subunit is responsible for the aldol cleavage of indoleglycerol phosphate to indole and glyceraldehyde 3-phosphate. This chain is Tryptophan synthase alpha chain, found in Listeria monocytogenes serotype 4b (strain F2365).